A 545-amino-acid polypeptide reads, in one-letter code: Chaperonin GroEL 2 (545 aa).

ATP contacts are provided by residues 29–32 (TLGP), 86–90 (DGTTT), Gly-413, 479–481 (NAA), and Asp-495.

This sequence belongs to the chaperonin (HSP60) family. Forms a cylinder of 14 subunits composed of two heptameric rings stacked back-to-back. Interacts with the co-chaperonin GroES.

It is found in the cytoplasm. It catalyses the reaction ATP + H2O + a folded polypeptide = ADP + phosphate + an unfolded polypeptide.. In terms of biological role, together with its co-chaperonin GroES, plays an essential role in assisting protein folding. The GroEL-GroES system forms a nano-cage that allows encapsulation of the non-native substrate proteins and provides a physical environment optimized to promote and accelerate protein folding. The sequence is that of Chaperonin GroEL 2 from Prochlorococcus marinus (strain MIT 9312).